Reading from the N-terminus, the 266-residue chain is Small ribosomal subunit protein uS3 (266 aa).

The region spanning 39-107 is the KH type-2 domain; sequence VREYLKKKLK…PVHVNIEEIR (69 aa). Residues 214–266 are disordered; sequence PVVEEVTEDKRPRRNARPGDRRPRRDGEGGAPGARRGGPRRGAGKPEDGKTGE. Composition is skewed to basic and acidic residues over residues 230–241 and 257–266; these read RPGDRRPRRDGE and GKPEDGKTGE.

The protein belongs to the universal ribosomal protein uS3 family. Part of the 30S ribosomal subunit. Forms a tight complex with proteins S10 and S14.

Its function is as follows. Binds the lower part of the 30S subunit head. Binds mRNA in the 70S ribosome, positioning it for translation. In Burkholderia mallei (strain NCTC 10247), this protein is Small ribosomal subunit protein uS3.